Here is a 212-residue protein sequence, read N- to C-terminus: Adenylate kinase (212 aa).

10 to 15 (GAGKGT) provides a ligand contact to ATP. Positions 30-59 (AIGDIFRTIIKTSTSEAELINNYVRQGELI) are NMP. AMP is bound by residues Arg36, 57–59 (ELI), 85–88 (GYPR), and Gln92. The interval 122–160 (GRYSCKNCGKIYNRYFLQPKTDNVCDVCGSSTFDYRKDD) is LID. Arg123 provides a ligand contact to ATP. 2 residues coordinate Zn(2+): Cys126 and Cys129. 132-133 (IY) lines the ATP pocket. Positions 146 and 149 each coordinate Zn(2+). AMP is bound by residues Arg157 and Arg168. ATP is bound at residue Lys196.

Belongs to the adenylate kinase family. Monomer.

It localises to the cytoplasm. It carries out the reaction AMP + ATP = 2 ADP. Its pathway is purine metabolism; AMP biosynthesis via salvage pathway; AMP from ADP: step 1/1. In terms of biological role, catalyzes the reversible transfer of the terminal phosphate group between ATP and AMP. Plays an important role in cellular energy homeostasis and in adenine nucleotide metabolism. This is Adenylate kinase from Rickettsia rickettsii (strain Iowa).